Here is a 254-residue protein sequence, read N- to C-terminus: Cell division protein DivIB (254 aa).

The Cytoplasmic segment spans residues 1–21; that stretch reads MPNAQIPVLKKNRTKKRTSRK. The helical transmembrane segment at 22-42 threads the bilayer; the sequence is IAILLILLFIVLLAVLFFRSS. The Extracellular segment spans residues 43–254; sequence LSRVSEIRFD…EEGQEKDTTQ (212 aa). Positions 44–112 constitute a POTRA domain; it reads SRVSEIRFDG…GIIAIHIKEF (69 aa).

It belongs to the FtsQ/DivIB family. DivIB subfamily.

Its subcellular location is the cell membrane. Functionally, cell division protein that may be involved in stabilizing or promoting the assembly of the division complex. The protein is Cell division protein DivIB of Paenibacillus polymyxa (strain E681).